Reading from the N-terminus, the 406-residue chain is telomere-associated protein 1 (406 aa).

Residues 20–40 (EHHNGSHDNDDKDKEDKEKQN) are compositionally biased toward basic and acidic residues. Positions 20-46 (EHHNGSHDNDDKDKEDKEKQNTEAVAA) are disordered. The region spanning 147-206 (TTRRVRLRWTQEETADLMEGCKVHGVGNWKKILTDPRFRFNNRTAVDLKDRFRTCFPEDY) is the HTH myb-type domain. A DNA-binding region (H-T-H motif) is located at residues 175 to 202 (WKKILTDPRFRFNNRTAVDLKDRFRTCF). Residues 234–288 (VNRKERRVFTPEEDERLLNGFMKHGPSWSNIQRDNELGLFERRSTDLRDRFRNAF) form the Myb-like domain. Residues 368 to 389 (TQELQPQAHSRKQQGGDGLKEE) form a disordered region.

The protein localises to the nucleus. Its subcellular location is the chromosome. It localises to the telomere. Telomere-binding protein that mediates telomere clustering by promoting formation of head-to-head dimers of DNA molecules through the telomeric tracts. Binds specifically 5'-TTAGTCAGGG-3' repeats in subtelomeric regions. This chain is telomere-associated protein 1, found in Yarrowia lipolytica (strain CLIB 122 / E 150) (Yeast).